The primary structure comprises 95 residues: Co-chaperonin GroES (95 aa).

Belongs to the GroES chaperonin family. In terms of assembly, heptamer of 7 subunits arranged in a ring. Interacts with the chaperonin GroEL.

It localises to the cytoplasm. Its function is as follows. Together with the chaperonin GroEL, plays an essential role in assisting protein folding. The GroEL-GroES system forms a nano-cage that allows encapsulation of the non-native substrate proteins and provides a physical environment optimized to promote and accelerate protein folding. GroES binds to the apical surface of the GroEL ring, thereby capping the opening of the GroEL channel. The chain is Co-chaperonin GroES from Alkalilimnicola ehrlichii (strain ATCC BAA-1101 / DSM 17681 / MLHE-1).